Here is a 427-residue protein sequence, read N- to C-terminus: MNAVIDIAPAPMQQGCGDAPVLHERGQREVFCGLAGIVWLHRKIQDAFFLVVGSRTCAHLLQSAAGVMIFAEPRFATAIIDDRDLAGLADANAELDRVVTRLLERRPDIKMLFLVGSCPSEVIKLDLSRAAERLSRNFSPRVRILSYTGSGIDTTFTQGEDTCLAALVPELPASEQRALMVVGSIADIVEDQFRRVFDGLGIGPVHFFPARHAGDMPPVGPGTRFVLAQPFLADTARALEARGARRLAAPFPFGAEGTTLWLQAIAREFNVEATKFVSVVGPRRERAARALARHRTQLEGRKVFFFPDSQLEVPLARFLAREMGMVPVEVGTPYLHRQLVASELALLPAGTPLSEGQDLERQLDRCRAARPDIVVCGLGLANPLEAEGLTTKWSIELVFTPVHGFDQAADLAELFTRPLERRTRLVA.

[4Fe-4S] cluster-binding residues include C32, C57, and C118.

It belongs to the BchN/ChlN family. Protochlorophyllide reductase is composed of three subunits; BchL, BchN and BchB. Forms a heterotetramer of two BchB and two BchN subunits. Requires [4Fe-4S] cluster as cofactor.

It carries out the reaction chlorophyllide a + oxidized 2[4Fe-4S]-[ferredoxin] + 2 ADP + 2 phosphate = protochlorophyllide a + reduced 2[4Fe-4S]-[ferredoxin] + 2 ATP + 2 H2O. Its pathway is porphyrin-containing compound metabolism; bacteriochlorophyll biosynthesis (light-independent). In terms of biological role, component of the dark-operative protochlorophyllide reductase (DPOR) that uses Mg-ATP and reduced ferredoxin to reduce ring D of protochlorophyllide (Pchlide) to form chlorophyllide a (Chlide). This reaction is light-independent. The NB-protein (BchN-BchB) is the catalytic component of the complex. The protein is Light-independent protochlorophyllide reductase subunit N of Rubrivivax gelatinosus (strain NBRC 100245 / IL144).